Consider the following 971-residue polypeptide: Exportin-2 (971 aa).

An Importin N-terminal domain is found at Ala-29–Ser-102.

Belongs to the XPO2/CSE1 family. As to quaternary structure, interacts with cftr.

Its subcellular location is the cytoplasm. The protein resides in the nucleus. In terms of biological role, export receptor for importin alpha. Mediates importin-alpha re-export from the nucleus to the cytoplasm after import substrates have been released into the nucleoplasm. Negatively regulates fluid secretion and plays a role in fluid homeostasis by down-regulating cftr activity. The sequence is that of Exportin-2 (cse1l) from Oreochromis niloticus (Nile tilapia).